We begin with the raw amino-acid sequence, 393 residues long: tRNA(Met) cytidine acetate ligase (393 aa).

ATP contacts are provided by glycine 81, asparagine 142, and arginine 167.

Belongs to the TmcAL family.

The protein resides in the cytoplasm. It carries out the reaction cytidine(34) in elongator tRNA(Met) + acetate + ATP = N(4)-acetylcytidine(34) in elongator tRNA(Met) + AMP + diphosphate. Its function is as follows. Catalyzes the formation of N(4)-acetylcytidine (ac(4)C) at the wobble position of elongator tRNA(Met), using acetate and ATP as substrates. First activates an acetate ion to form acetyladenylate (Ac-AMP) and then transfers the acetyl group to tRNA to form ac(4)C34. This is tRNA(Met) cytidine acetate ligase from Bacillus cereus (strain ATCC 10987 / NRS 248).